A 226-amino-acid polypeptide reads, in one-letter code: Probable thiol methyltransferase 2 (226 aa).

The S-adenosyl-L-methionine site is built by W29, W33, W40, and G67. Residue S79 is modified to Phosphoserine. S-adenosyl-L-methionine-binding positions include D88, 116-117 (DF), and Y132.

It belongs to the class I-like SAM-binding methyltransferase superfamily. TPMT family.

It catalyses the reaction a thiol + S-adenosyl-L-methionine = a methyl thioether + S-adenosyl-L-homocysteine + H(+). Its function is as follows. S-adenosyl-L-methionine-dependent methyltransferase. The sequence is that of Probable thiol methyltransferase 2 (HOL3) from Arabidopsis thaliana (Mouse-ear cress).